The chain runs to 182 residues: Crossover junction endodeoxyribonuclease RuvC (182 aa).

Catalysis depends on residues Asp7, Glu69, and Asp141. The Mg(2+) site is built by Asp7, Glu69, and Asp141.

It belongs to the RuvC family. Homodimer which binds Holliday junction (HJ) DNA. The HJ becomes 2-fold symmetrical on binding to RuvC with unstacked arms; it has a different conformation from HJ DNA in complex with RuvA. In the full resolvosome a probable DNA-RuvA(4)-RuvB(12)-RuvC(2) complex forms which resolves the HJ. It depends on Mg(2+) as a cofactor.

The protein localises to the cytoplasm. It catalyses the reaction Endonucleolytic cleavage at a junction such as a reciprocal single-stranded crossover between two homologous DNA duplexes (Holliday junction).. The RuvA-RuvB-RuvC complex processes Holliday junction (HJ) DNA during genetic recombination and DNA repair. Endonuclease that resolves HJ intermediates. Cleaves cruciform DNA by making single-stranded nicks across the HJ at symmetrical positions within the homologous arms, yielding a 5'-phosphate and a 3'-hydroxyl group; requires a central core of homology in the junction. The consensus cleavage sequence is 5'-(A/T)TT(C/G)-3'. Cleavage occurs on the 3'-side of the TT dinucleotide at the point of strand exchange. HJ branch migration catalyzed by RuvA-RuvB allows RuvC to scan DNA until it finds its consensus sequence, where it cleaves and resolves the cruciform DNA. In Polaromonas naphthalenivorans (strain CJ2), this protein is Crossover junction endodeoxyribonuclease RuvC.